The chain runs to 588 residues: Putative pentatricopeptide repeat-containing protein At5g52630 (588 aa).

PPR repeat units lie at residues 14 to 48 (NYNQ…GLSL), 49 to 79 (IPLV…SPQK), 80 to 114 (SSTT…NLRP), 115 to 149 (DDHV…GYDA), 150 to 180 (DVFV…MPQR), 181 to 215 (NVVT…NLAV), 216 to 250 (NDYS…SFDS), 251 to 281 (SSFV…VPVK), 282 to 316 (NLGI…GMKP), 317 to 351 (NFIT…RIEP), and 352 to 386 (TDKH…PTES). The interval 387 to 462 (VWGALLTSCT…ETGLSWVEER (76 aa)) is type E motif. The type E(+) motif stretch occupies residues 463-493 (NKVHTFAAGERRHEKSKEIYEKLAELGEEME). The type DYW motif stretch occupies residues 494–588 (KAGYIADTSY…DGKCSCNDYW (95 aa)).

The protein belongs to the PPR family. PCMP-H subfamily.

This Arabidopsis thaliana (Mouse-ear cress) protein is Putative pentatricopeptide repeat-containing protein At5g52630 (PCMP-H52).